The following is a 70-amino-acid chain: Large ribosomal subunit protein eL38 (70 aa).

Residue lysine 4 forms a Glycyl lysine isopeptide (Lys-Gly) (interchain with G-Cter in SUMO2) linkage. N6-acetyllysine; alternate is present on lysine 9. Lysine 9 participates in a covalent cross-link: Glycyl lysine isopeptide (Lys-Gly) (interchain with G-Cter in SUMO2); alternate. At lysine 67 the chain carries N6-acetyllysine.

The protein belongs to the eukaryotic ribosomal protein eL38 family. As to quaternary structure, component of the large ribosomal subunit.

It localises to the cytoplasm. Component of the large ribosomal subunit. The ribosome is a large ribonucleoprotein complex responsible for the synthesis of proteins in the cell. The protein is Large ribosomal subunit protein eL38 (RPL38) of Macaca fascicularis (Crab-eating macaque).